A 526-amino-acid polypeptide reads, in one-letter code: MLRFGIKTWKRSVLAIRRSSTAPHVQIISNLQKKLLNELYSLRRLVDDNSPATIRVGNVSLLLSKSNIRRRIALQALSSSAEDVACVKQITHALLAAPFMPESKELKYAMDHNGLNPLYISFGTNALFERNARYSTSHLFLPSDFLQVNNLEIIHLPPGTVDSDILASCHARYICSTSYLRMTSSDFTTADTLVLDIDPKLHSLLKNEKSIIPVSSSAALKATKALQDDPHNFQNYQNQWEQSGFQQLRTNMTPTSDLEICKRFLNYLCCSFSLTKAEKDLVRATEFSNSMLISIEKWAKYCDVDLQEFEKKLQKFWKNFGTLKLYSNIESLPASLKQLIKDEYLQKSKLELSFILGELSKNGDDKNNFELAMKDFGTFQNSRMSAVDQALQPLRRKTLYTTAFQGLGALGSLYLYFVSHFSLYNAFSVFSVCGVFGLYYLQSSYRSWKKEYWKELLEEGRKFERQLCRNVFGRSSFYVQQKTAAEKKEHISLIMKKLTKTLDLMKEFQLQSSFSDSPTASKKQLL.

2 helical membrane passes run 398–418 (TLYT…LYFV) and 421–441 (FSLY…LYYL).

Its subcellular location is the mitochondrion membrane. Its function is as follows. Required for correct meiotic chromosome segregation. Appears to also have role in sporulation. The chain is Meiotically up-regulated gene 99 protein, mitochondrial (mug99) from Schizosaccharomyces pombe (strain 972 / ATCC 24843) (Fission yeast).